The sequence spans 85 residues: Putative membrane protein insertion efficiency factor (85 aa).

This sequence belongs to the UPF0161 family.

It is found in the cell inner membrane. Its function is as follows. Could be involved in insertion of integral membrane proteins into the membrane. The polypeptide is Putative membrane protein insertion efficiency factor (Dictyoglomus thermophilum (strain ATCC 35947 / DSM 3960 / H-6-12)).